A 447-amino-acid chain; its full sequence is Interferon-induced protein 44-like (447 aa).

In terms of domain architecture, TLDc spans 1–159 (MKVTARLTWI…PVECEIFRVD (159 aa)).

This sequence belongs to the IFI44 family. HA-28 antigen forms a complex with Kb MHC in BALB.B donor cells. Interacts with FKBP5; this interaction modulates IKBKB and IKBKE kinase activities. As to expression, expressed on cells of the hematopoietic lineage. Detected in transformed cell lines of the macrophage and B-cell lineage. Expressed in spleen and bone marrow.

Its subcellular location is the cytoplasm. In terms of biological role, type I interferon-stimulated gene (ISG) that plays a critical role in antiviral and antibacterial activity. During bacterial infection, promotes macrophage differentiation and facilitates inflammatory cytokine secretion. Plays a role in the control of respiratory syncycial virus/RSV infection, reducing the ability of the virus to replicate. Acts as a feedback regulator of IFN responses by negatively regulating IKBKB kinase activity through interaction with FKBP5. Its function is as follows. Precursor of the histocompatibility antigen HA-28 in BALB.B mice. More generally, minor histocompatibility antigens refer to immunogenic peptide which, when complexed with MHC, can generate an immune response after recognition by specific T-cells. The peptides are derived from polymorphic intracellular proteins, which are cleaved by normal pathways of antigen processing. The binding of these peptides to MHC molecules and its expression on the cell surface can stimulate T-cell responses and thereby trigger graft rejection or graft-versus-host disease (GVHD). More specifically, HA-28 minor antigen is transcribed in the BALB.B donor but not in host C57BL/6 cells. HA-28 is presented to the donor BALB.B cell surface by Kb MHC. This complex HA-28/Kb MHC elicits cytotoxic T-cell response in C57BL/6 mice immunized with BALB.B spleen cells. It induces C57BL/6 mice cells recognition and lysis by CD8 T-cell from BALB.B mice. This Mus musculus (Mouse) protein is Interferon-induced protein 44-like (Ifi44l).